A 295-amino-acid chain; its full sequence is Peptide transport system permease protein SapC (295 aa).

A run of 6 helical transmembrane segments spans residues 27–47 (IALF…FASY), 102–122 (LLVV…AGLL), 129–149 (FVGH…AVVI), 157–177 (LWNA…HTIY), 219–239 (VARA…ISLG), and 262–282 (PWTV…SIIF). The region spanning 98 to 278 (LGSALLVVFS…GFAIIFTILL (181 aa)) is the ABC transmembrane type-1 domain.

It belongs to the binding-protein-dependent transport system permease family. OppBC subfamily.

The protein resides in the cell inner membrane. In terms of biological role, involved in a peptide intake transport system that plays a role in the resistance to antimicrobial peptides. The sequence is that of Peptide transport system permease protein SapC (sapC) from Haemophilus influenzae (strain ATCC 51907 / DSM 11121 / KW20 / Rd).